The sequence spans 318 residues: Protein W (318 aa).

2 disordered regions span residues 1 to 24 (MDQD…GRES) and 38 to 318 (SEPT…KKGA). Over residues 7 to 20 (ISKEDSEVEREASG) the composition is skewed to basic and acidic residues. Residues 50-61 (LHNTINTLQRPG) are compositionally biased toward polar residues. Basic and acidic residues-rich tracts occupy residues 99 to 110 (AEAHARNVDKQN) and 150 to 168 (GAED…RGED). A phosphoserine; by host mark is found at S249, S257, and S260.

This is Protein W (P/V/C) from Sendai virus (strain Hamamatsu) (SeV).